The sequence spans 184 residues: Non-specific lipid transfer protein GPI-anchored 6 (184 aa).

Residues 1–24 (MEKSTRTLFITIVITSMLLGFGNS) form the signal peptide. 4 cysteine pairs are disulfide-bonded: cysteine 33–cysteine 74, cysteine 43–cysteine 58, cysteine 59–cysteine 101, and cysteine 72–cysteine 111. The interval 138-158 (NSTSPTQIHKDGTGGGKAEPV) is disordered. The GPI-anchor amidated serine moiety is linked to residue serine 160. Positions 161–184 (NGWKEKSWLGVELLIYLLVSLIFF) are cleaved as a propeptide — removed in mature form.

The protein belongs to the plant LTP family. Preferentially expressed in the shoot apical meristem and the root meristem. Also present in the ovules and developing embryos. Observed in cotyledons, hypocotyls, flowers, leaves and siliques. Up-regulated in the epidermis of stems.

It localises to the cell membrane. Functionally, lipid transfer protein involved in seed and ovule maturation and development, probably by regulating the fatty acids homeostasis during suberin and sporopollenin biosynthesis or deposition. Contributes to pre-invasive defense against some non-host powdery mildew pathogens by preventing the penetration of the epidermal cell wall by the fungal agents (e.g. Blumeria graminis f. sp. hordei (Bgh)). In Arabidopsis thaliana (Mouse-ear cress), this protein is Non-specific lipid transfer protein GPI-anchored 6.